The sequence spans 211 residues: Large ribosomal subunit protein uL4 (211 aa).

The segment at 50–77 (STLTKGEVSGGGKKPYKQKHTGKARQGS) is disordered. The span at 63–72 (KPYKQKHTGK) shows a compositional bias: basic residues.

The protein belongs to the universal ribosomal protein uL4 family. As to quaternary structure, part of the 50S ribosomal subunit.

Its function is as follows. One of the primary rRNA binding proteins, this protein initially binds near the 5'-end of the 23S rRNA. It is important during the early stages of 50S assembly. It makes multiple contacts with different domains of the 23S rRNA in the assembled 50S subunit and ribosome. Functionally, forms part of the polypeptide exit tunnel. The sequence is that of Large ribosomal subunit protein uL4 from Mycoplasma genitalium (strain ATCC 33530 / DSM 19775 / NCTC 10195 / G37) (Mycoplasmoides genitalium).